The sequence spans 263 residues: tRNA (guanine-N(7)-)-methyltransferase (263 aa).

Residues 1-10 (MLPQDPSTEP) are compositionally biased toward polar residues. A disordered region spans residues 1–38 (MLPQDPSTEPTPADDAAPVDSAGQASAPSPADPEGVAH). Positions 91, 116, 143, and 166 each coordinate S-adenosyl-L-methionine. Aspartate 166 is an active-site residue. Lysine 170 serves as a coordination point for substrate. Residues 172–177 (RHNKRR) form an interaction with RNA region. Residues aspartate 202 and 240 to 243 (TKFE) contribute to the substrate site.

Belongs to the class I-like SAM-binding methyltransferase superfamily. TrmB family.

It catalyses the reaction guanosine(46) in tRNA + S-adenosyl-L-methionine = N(7)-methylguanosine(46) in tRNA + S-adenosyl-L-homocysteine. The protein operates within tRNA modification; N(7)-methylguanine-tRNA biosynthesis. Its function is as follows. Catalyzes the formation of N(7)-methylguanine at position 46 (m7G46) in tRNA. The sequence is that of tRNA (guanine-N(7)-)-methyltransferase from Cupriavidus necator (strain ATCC 17699 / DSM 428 / KCTC 22496 / NCIMB 10442 / H16 / Stanier 337) (Ralstonia eutropha).